The following is a 97-amino-acid chain: HssA/B-like protein 27 (97 aa).

Belongs to the hssA/B family.

The sequence is that of HssA/B-like protein 27 (hssl27) from Dictyostelium discoideum (Social amoeba).